The primary structure comprises 508 residues: Cobyric acid synthase (508 aa).

Residues glutamate 255–tryptophan 454 enclose the GATase cobBQ-type domain. Cysteine 336 functions as the Nucleophile in the catalytic mechanism. The active site involves histidine 446.

This sequence belongs to the CobB/CobQ family. CobQ subfamily.

It functions in the pathway cofactor biosynthesis; adenosylcobalamin biosynthesis. In terms of biological role, catalyzes amidations at positions B, D, E, and G on adenosylcobyrinic A,C-diamide. NH(2) groups are provided by glutamine, and one molecule of ATP is hydrogenolyzed for each amidation. This is Cobyric acid synthase from Synechococcus sp. (strain CC9311).